A 432-amino-acid polypeptide reads, in one-letter code: Trigger factor (432 aa).

The PPIase FKBP-type domain maps to 161-246; sequence DDRVTIDFVG…LKKIENMVLP (86 aa).

The protein belongs to the FKBP-type PPIase family. Tig subfamily.

It localises to the cytoplasm. It catalyses the reaction [protein]-peptidylproline (omega=180) = [protein]-peptidylproline (omega=0). Functionally, involved in protein export. Acts as a chaperone by maintaining the newly synthesized protein in an open conformation. Functions as a peptidyl-prolyl cis-trans isomerase. The chain is Trigger factor from Haemophilus influenzae (strain PittEE).